The chain runs to 156 residues: Peroxisome assembly protein 22 (156 aa).

Residues 24 to 46 (LSIIAVGVLSTVAVTVGYLLYLY) form a helical membrane-spanning segment.

This sequence belongs to the peroxin-22 family.

It is found in the peroxisome membrane. Involved in peroxisome biogenesis. This is Peroxisome assembly protein 22 (PEX22) from Kluyveromyces lactis (strain ATCC 8585 / CBS 2359 / DSM 70799 / NBRC 1267 / NRRL Y-1140 / WM37) (Yeast).